We begin with the raw amino-acid sequence, 793 residues long: DNA mismatch repair protein MutS (793 aa).

589 to 596 (GPNMSGKS) is a binding site for ATP.

It belongs to the DNA mismatch repair MutS family.

This protein is involved in the repair of mismatches in DNA. It is possible that it carries out the mismatch recognition step. This protein has a weak ATPase activity. This Thermotoga sp. (strain RQ2) protein is DNA mismatch repair protein MutS.